Here is a 358-residue protein sequence, read N- to C-terminus: Nicotinate-nucleotide--dimethylbenzimidazole phosphoribosyltransferase (358 aa).

Glu313 (proton acceptor) is an active-site residue.

This sequence belongs to the CobT family.

It carries out the reaction 5,6-dimethylbenzimidazole + nicotinate beta-D-ribonucleotide = alpha-ribazole 5'-phosphate + nicotinate + H(+). It functions in the pathway nucleoside biosynthesis; alpha-ribazole biosynthesis; alpha-ribazole from 5,6-dimethylbenzimidazole: step 1/2. Catalyzes the synthesis of alpha-ribazole-5'-phosphate from nicotinate mononucleotide (NAMN) and 5,6-dimethylbenzimidazole (DMB). The sequence is that of Nicotinate-nucleotide--dimethylbenzimidazole phosphoribosyltransferase from Corynebacterium glutamicum (strain R).